The chain runs to 104 residues: DCDYTCGSHCYSASAVSDAQSAGYQLYSAGQSVGRSRYPHQYRNYEGFNFPVSGNYYEWPILSSGSTYNGGSPGADRVVFNNNDELAGLITHTGASGNGFVACG.

2 disulfide bridges follow: C2/C10 and C6/C103. H40 is an active-site residue. E58 acts as the Proton acceptor in catalysis. H92 functions as the Proton donor in the catalytic mechanism.

This sequence belongs to the ribonuclease N1/T1 family.

It localises to the secreted. It catalyses the reaction [RNA] containing guanosine + H2O = an [RNA fragment]-3'-guanosine-3'-phosphate + a 5'-hydroxy-ribonucleotide-3'-[RNA fragment].. The sequence is that of Guanyl-specific ribonuclease Ap1 from Aspergillus pallidus.